The chain runs to 675 residues: UvrABC system protein B (675 aa).

The Helicase ATP-binding domain maps to 32-417 (EGLSDGLAYQ…EHAGQVVEQV (386 aa)). ATP is bound at residue 45–52 (GVTGSGKT). The Beta-hairpin signature appears at 98-121 (YYDYYQPEAYVPSRDLFIEKDSAI). The region spanning 436 to 602 (QVDDLMSEIN…QIKKQVKDII (167 aa)) is the Helicase C-terminal domain. The region spanning 634–669 (IKEIAKLEKAMQQAARDLQFEEAAVLRDRIRNIKEN) is the UVR domain.

The protein belongs to the UvrB family. As to quaternary structure, forms a heterotetramer with UvrA during the search for lesions. Interacts with UvrC in an incision complex.

Its subcellular location is the cytoplasm. Functionally, the UvrABC repair system catalyzes the recognition and processing of DNA lesions. A damage recognition complex composed of 2 UvrA and 2 UvrB subunits scans DNA for abnormalities. Upon binding of the UvrA(2)B(2) complex to a putative damaged site, the DNA wraps around one UvrB monomer. DNA wrap is dependent on ATP binding by UvrB and probably causes local melting of the DNA helix, facilitating insertion of UvrB beta-hairpin between the DNA strands. Then UvrB probes one DNA strand for the presence of a lesion. If a lesion is found the UvrA subunits dissociate and the UvrB-DNA preincision complex is formed. This complex is subsequently bound by UvrC and the second UvrB is released. If no lesion is found, the DNA wraps around the other UvrB subunit that will check the other stand for damage. The protein is UvrABC system protein B of Neisseria gonorrhoeae.